Here is a 132-residue protein sequence, read N- to C-terminus: uncharacterized protein (132 aa).

The disordered stretch occupies residues 39–93; that stretch reads HPAGASEALGALPPPRQLVEKRRVSPPRRLDQSGRDGGAVAKCSLSRGLSPPGWT. Over residues 56–72 the composition is skewed to basic and acidic residues; the sequence is LVEKRRVSPPRRLDQSG.

This is an uncharacterized protein from Homo sapiens (Human).